Reading from the N-terminus, the 143-residue chain is Transcriptional regulator MraZ (143 aa).

SpoVT-AbrB domains are found at residues 5–47 (SHTP…PMAE) and 76–119 (AADD…DAQR).

The protein belongs to the MraZ family. Forms oligomers.

The protein localises to the cytoplasm. It is found in the nucleoid. This is Transcriptional regulator MraZ from Frankia alni (strain DSM 45986 / CECT 9034 / ACN14a).